The chain runs to 314 residues: MEFKHTSVLLHETIDNLAPQSGGTYVDATFGGGGHARYLLRKLDKGNLIGFDQDQYAIDTAQSNFAAFLKEDSQPRLQLVHNNFSHLKEELAKLGISGIDGIYYDLGVSSPQLDQAERGFSYRFDARLDMRMDQSQDFDAYQLVNQYDQKQLADVLYRYGDEKFSRQIARKIVERRRGKPIETTFELVEIIKEAIPAAARRRGGHPAKKSFQAIRVEVNHELDVLRASLEEAISLLNPGGRISVITFQSLEDKIVKQTFKKYSEVEIPRGMPVVPEGIKPTLRLVNRKSITASEEELAENNRSHSAKLRVAEKL.

S-adenosyl-L-methionine-binding positions include 33–35 (GGH), Asp52, Phe84, Asp105, and Gln112.

Belongs to the methyltransferase superfamily. RsmH family.

The protein localises to the cytoplasm. It carries out the reaction cytidine(1402) in 16S rRNA + S-adenosyl-L-methionine = N(4)-methylcytidine(1402) in 16S rRNA + S-adenosyl-L-homocysteine + H(+). Its function is as follows. Specifically methylates the N4 position of cytidine in position 1402 (C1402) of 16S rRNA. This is Ribosomal RNA small subunit methyltransferase H from Lactobacillus delbrueckii subsp. bulgaricus (strain ATCC 11842 / DSM 20081 / BCRC 10696 / JCM 1002 / NBRC 13953 / NCIMB 11778 / NCTC 12712 / WDCM 00102 / Lb 14).